A 469-amino-acid chain; its full sequence is Sulfate adenylyltransferase subunit 1 (469 aa).

The tr-type G domain maps to 22 to 236; that stretch reads KDMLRFLTCG…TLENIEIGND (215 aa). The segment at 31–38 is G1; sequence GSVDDGKS. 31 to 38 provides a ligand contact to GTP; that stretch reads GSVDDGKS. The tract at residues 89 to 93 is G2; the sequence is GITID. Residues 110–113 form a G3 region; it reads DTPG. Residues 110 to 114 and 165 to 168 each bind GTP; these read DTPGH and NKMD. Residues 165-168 are G4; it reads NKMD. Residues 202-204 are G5; that stretch reads SAL.

The protein belongs to the TRAFAC class translation factor GTPase superfamily. Classic translation factor GTPase family. CysN/NodQ subfamily. Heterodimer composed of CysD, the smaller subunit, and CysN.

The catalysed reaction is sulfate + ATP + H(+) = adenosine 5'-phosphosulfate + diphosphate. It participates in sulfur metabolism; hydrogen sulfide biosynthesis; sulfite from sulfate: step 1/3. With CysD forms the ATP sulfurylase (ATPS) that catalyzes the adenylation of sulfate producing adenosine 5'-phosphosulfate (APS) and diphosphate, the first enzymatic step in sulfur assimilation pathway. APS synthesis involves the formation of a high-energy phosphoric-sulfuric acid anhydride bond driven by GTP hydrolysis by CysN coupled to ATP hydrolysis by CysD. The protein is Sulfate adenylyltransferase subunit 1 of Pseudoalteromonas atlantica (strain T6c / ATCC BAA-1087).